Reading from the N-terminus, the 457-residue chain is UDP-glucosyltransferase 45 (457 aa).

The Proton acceptor role is filled by His21. An anthocyanidin is bound at residue His21. Asp112 (charge relay) is an active-site residue. 9 residues coordinate UDP-alpha-D-glucose: Thr134, Gln336, His351, Trp354, Asn355, Ser356, Glu359, Asp375, and Gln376.

It belongs to the UDP-glycosyltransferase family.

The catalysed reaction is (20S)-protopanaxadiol + UDP-alpha-D-glucose = (20S)-ginsenoside Rh2 + UDP + H(+). It functions in the pathway secondary metabolite biosynthesis; terpenoid biosynthesis. Component of the triterpene saponins (e.g. PPD-type ginsenosides) biosynthetic pathway. Glycosyltransferase that catalyzes the biosynthesis of ginsenoside Rh2 from protopanaxadiol (PPD). The protein is UDP-glucosyltransferase 45 of Panax ginseng (Korean ginseng).